Consider the following 95-residue polypeptide: Small ribosomal subunit protein bS18 (95 aa).

It belongs to the bacterial ribosomal protein bS18 family. Part of the 30S ribosomal subunit. Forms a tight heterodimer with protein bS6.

Its function is as follows. Binds as a heterodimer with protein bS6 to the central domain of the 16S rRNA, where it helps stabilize the platform of the 30S subunit. This chain is Small ribosomal subunit protein bS18, found in Rickettsia peacockii (strain Rustic).